Consider the following 281-residue polypeptide: Ribosomal RNA small subunit methyltransferase A (281 aa).

N21, L23, G48, E69, D92, and N113 together coordinate S-adenosyl-L-methionine.

Belongs to the class I-like SAM-binding methyltransferase superfamily. rRNA adenine N(6)-methyltransferase family. RsmA subfamily.

It localises to the cytoplasm. The catalysed reaction is adenosine(1518)/adenosine(1519) in 16S rRNA + 4 S-adenosyl-L-methionine = N(6)-dimethyladenosine(1518)/N(6)-dimethyladenosine(1519) in 16S rRNA + 4 S-adenosyl-L-homocysteine + 4 H(+). Its function is as follows. Specifically dimethylates two adjacent adenosines (A1518 and A1519) in the loop of a conserved hairpin near the 3'-end of 16S rRNA in the 30S particle. May play a critical role in biogenesis of 30S subunits. This chain is Ribosomal RNA small subunit methyltransferase A, found in Ralstonia nicotianae (strain ATCC BAA-1114 / GMI1000) (Ralstonia solanacearum).